Here is a 380-residue protein sequence, read N- to C-terminus: MAREAEKDAAAAAEIPLLTPYKMGRFELSHRVVLAPLTRNRSYGNVPRPHAVLYYTQRATSGGLLVTEATGVSDTAQGYPDTPGIWTQQQVEAWKPIVDAVHRKGALFICQLWHVGRVSTNEYQPDGQAPISSTDRQITPDDSGIVYSKPRRLRTEEIPQIIDDFRRAARNAIEAGFDGVEIHGAHGYLLEQFMKDSANDRSDEYGGSLENRCRFVVEVIDAIVAEVGAHRVGIRLSPFIDYMDCVDSDPVALGSYMVQQLNKHPGFLYCHMVEPRMAIVEGRRKITHGLLPFRKLFNGTFIAAGGYDREEGNKVIADGYADLVAYGRHFLANPDLPKRFAINAPLNKYNRSTFYIQDPVVGYTDYPFLDEKDEGAATYA.

FMN-binding positions include 36–38 (PLT), alanine 69, and glutamine 111. Substrate is bound at residue 183 to 186 (HGAH). Catalysis depends on tyrosine 188, which acts as the Proton donor. Arginine 235 lines the FMN pocket. Residue arginine 276 coordinates substrate. Residues glycine 306 and 327 to 328 (GR) each bind FMN.

It belongs to the NADH:flavin oxidoreductase/NADH oxidase family. The cofactor is FMN.

In terms of biological role, putative oxophytodienoate reductase that may be involved in the biosynthesis or metabolism of oxylipin signaling molecules. In Oryza sativa subsp. japonica (Rice), this protein is Putative 12-oxophytodienoate reductase 4 (OPR4).